A 133-amino-acid polypeptide reads, in one-letter code: ATP synthase epsilon chain (133 aa).

The interval 103–133 (VSQMEGQEPSTEKIKAQQNFNRARARVQATK) is disordered.

It belongs to the ATPase epsilon chain family. As to quaternary structure, F-type ATPases have 2 components, CF(1) - the catalytic core - and CF(0) - the membrane proton channel. CF(1) has five subunits: alpha(3), beta(3), gamma(1), delta(1), epsilon(1). CF(0) has three main subunits: a, b and c.

The protein resides in the cellular thylakoid membrane. Functionally, produces ATP from ADP in the presence of a proton gradient across the membrane. In Prochlorococcus marinus (strain MIT 9313), this protein is ATP synthase epsilon chain.